Reading from the N-terminus, the 124-residue chain is Protein archease (124 aa).

Ca(2+) contacts are provided by H7, D10, D123, and T124.

This sequence belongs to the archease family.

Functionally, activates the tRNA-splicing ligase complex by facilitating the enzymatic turnover of catalytic subunit RtcB. Acts by promoting the guanylylation of RtcB, a key intermediate step in tRNA ligation. Can also alter the NTP specificity of RtcB such that ATP, dGTP or ITP is used efficiently. May also act as a chaperone or modulator of proteins involved in DNA or RNA processing. The sequence is that of Protein archease from Thermotoga maritima (strain ATCC 43589 / DSM 3109 / JCM 10099 / NBRC 100826 / MSB8).